Consider the following 264-residue polypeptide: Osteopontin (264 aa).

Residues 1 to 16 (MKLAFLCLCFISIAAA) form the signal peptide. Disordered stretches follow at residues 21 to 141 (KSRQ…RGDS) and 166 to 264 (IEDD…EVTR). The span at 31 to 51 (SEEKYDPRSHHTHRYHQDHVD) shows a compositional bias: basic and acidic residues. Residues 52–73 (SQSQEHLQQTQNDLASLQQTHY) are compositionally biased toward polar residues. Acidic residues predominate over residues 97–118 (AVDDDDDDDNDSNDTDESDEVV). 2 N-linked (GlcNAc...) asparagine glycosylation sites follow: Asn106 and Asn109. The short motif at 132 to 134 (RGD) is the Cell attachment site element. The span at 186 to 212 (KESREQDSRELAQHQSVENDSRPRFDS) shows a compositional bias: basic and acidic residues. Asn204 and Asn242 each carry an N-linked (GlcNAc...) asparagine glycan. The span at 233-246 (ASRSAVDTSNQTLE) shows a compositional bias: polar residues. Over residues 252-264 (EDRHSIENNEVTR) the composition is skewed to basic and acidic residues.

It belongs to the osteopontin family. Extensively phosphorylated on serine residues.

It localises to the secreted. Major non-collagenous bone protein that binds tightly to hydroxyapatite. Appears to form an integral part of the mineralized matrix. Probably important to cell-matrix interaction. Functionally, acts as a cytokine involved in enhancing production of interferon-gamma and interleukin-12 and reducing production of interleukin-10 and is essential in the pathway that leads to type I immunity. This Gallus gallus (Chicken) protein is Osteopontin (SPP1).